A 343-amino-acid chain; its full sequence is Methionine import ATP-binding protein MetN 1 (343 aa).

The ABC transporter domain occupies 2 to 241 (IKLTHISKVF…PKTPLAQQFI (240 aa)). 38–45 (GASGAGKS) is an ATP binding site.

This sequence belongs to the ABC transporter superfamily. Methionine importer (TC 3.A.1.24) family. The complex is composed of two ATP-binding proteins (MetN), two transmembrane proteins (MetI) and a solute-binding protein (MetQ).

The protein localises to the cell inner membrane. The enzyme catalyses L-methionine(out) + ATP + H2O = L-methionine(in) + ADP + phosphate + H(+). It catalyses the reaction D-methionine(out) + ATP + H2O = D-methionine(in) + ADP + phosphate + H(+). In terms of biological role, part of the ABC transporter complex MetNIQ involved in methionine import. Responsible for energy coupling to the transport system. The polypeptide is Methionine import ATP-binding protein MetN 1 (Yersinia pestis bv. Antiqua (strain Antiqua)).